The primary structure comprises 600 residues: Pyranose dehydrogenase 3 (600 aa).

Positions 1–25 (MLPRVARLNTHLVSLALLGFQITYG) are cleaved as a signal peptide. N-linked (GlcNAc...) asparagine glycosylation is found at Asn-99 and Asn-114. His-127 is modified (tele-8alpha-FAD histidine). N-linked (GlcNAc...) asparagine glycans are attached at residues Asn-173, Asn-199, Asn-275, Asn-342, Asn-399, and Asn-507. Residue His-535 is the Proton acceptor of the active site. N-linked (GlcNAc...) asparagine glycosylation is present at Asn-546. His-579 is an active-site residue.

This sequence belongs to the GMC oxidoreductase family. Monomer. The cofactor is FAD. N-glycosylated.

The protein localises to the secreted. The enzyme catalyses pyranose + acceptor = pyranos-2-ulose + reduced acceptor.. It carries out the reaction pyranose + acceptor = pyranos-3-ulose + reduced acceptor.. The catalysed reaction is pyranose + acceptor = pyranos-2,3-diulose + reduced acceptor.. It catalyses the reaction a pyranoside + acceptor = a pyranosid-3-ulose + reduced acceptor.. The enzyme catalyses a pyranoside + acceptor = a pyranosid-3,4-diulose + reduced acceptor.. Functionally, catalyzes the single-oxidation or sequential double oxidation reaction of carbohydrates primarily at carbon-2 and/or carbon-3 with the concomitant reduction of the flavin. The enzyme exhibits a broad sugar substrate specificity, oxidizing different aldopyranoses to the corresponding C-1, C-2, C-3 or C-1,2, C-2,3 and C-3,4 (di)dehydro sugars with substrate-specific regioselectivity. Accepts only a narrow range of electron acceptors such as substituted benzoquinones and complexed metal ions and reacts extremely slowly with O(2) as acceptor. May play a role in the natural recycling of plant matter by oxidizing all major monosaccharides in lignocellulose and by reducing quinone compounds or reactive radical species generated during lignin depolymerization. This is Pyranose dehydrogenase 3 from Leucoagaricus meleagris (Western flat-topped agaric).